Reading from the N-terminus, the 882-residue chain is Holliday junction resolvase MOC1, chloroplastic (882 aa).

Disordered stretches follow at residues 87-148 and 323-351; these read IRDG…QTPT and TPAA…PRAA. Polar residues predominate over residues 91-111; it reads PNSNSRCSTVRTHATRSKSTG. A compositionally biased stretch (low complexity) spans 112 to 125; it reads PSRATSSGPATAAP. Residues 134-148 are compositionally biased toward polar residues; it reads NDTQDGGLTSEQTPT. Residues 323 to 337 are compositionally biased toward low complexity; sequence TPAAASQTPPTTVTS. Residues Asp397, Glu552, Asn629, and Asp634 each coordinate Mg(2+). A disordered region spans residues 710 to 882; sequence KVERKAQARS…DGGVSGSESE (173 aa). The segment covering 732 to 743 has biased composition (acidic residues); it reads EEPEAQAEEEQA. Low complexity-rich tracts occupy residues 744–758, 769–783, 810–819, and 830–844; these read EAGT…GAAA, VESG…VAAG, SGKSSSKAEA, and ASVG…SVGS. Composition is skewed to gly residues over residues 845–857 and 868–882; these read SSGG…GGVK and AKAG…SESE.

It depends on Mg(2+) as a cofactor. Mn(2+) serves as cofactor.

It localises to the plastid. It is found in the chloroplast. The catalysed reaction is Endonucleolytic cleavage at a junction such as a reciprocal single-stranded crossover between two homologous DNA duplexes (Holliday junction).. A structure-specific endonuclease that resolves Holliday junction (HJ) intermediates during genetic recombination. Cleaves 4-way DNA junctions introducing paired nicks in opposing strands, leaving a 5'-terminal phosphate and a 3'-terminal hydroxyl group that are ligated to produce recombinant products. Mediates chloroplast nucleoid segregation during chloroplast division. The sequence is that of Holliday junction resolvase MOC1, chloroplastic from Chlamydomonas reinhardtii (Chlamydomonas smithii).